We begin with the raw amino-acid sequence, 201 residues long: MYB-like transcription factor EOBI (201 aa).

HTH myb-type domains lie at 10–62 (DVEV…LNYL) and 63–117 (RPDV…QKHI). 2 consecutive DNA-binding regions (H-T-H motif) follow at residues 38-62 (WNSL…LNYL) and 90-113 (WSKI…RTRI). The disordered stretch occupies residues 121–170 (DQNMKKPSKCEQNDQKAISTSQASTGPTDTIDSYSPSSYTENTNNNMENI). Over residues 135–159 (QKAISTSQASTGPTDTIDSYSPSSY) the composition is skewed to polar residues. The span at 160-169 (TENTNNNMEN) shows a compositional bias: low complexity.

In terms of tissue distribution, expressed exclusively in flower organs. Accumulates mostly in flower limbs, to a lower extent in pistils and flower tubes, and, at low levels, in stamens.

It is found in the nucleus. MYB-type transcription factor controlling the production of volatile organic compounds (VOCs), including floral volatile benzenoids and phenylpropanoids (FVBP), in flowers of fragrant cultivars (e.g. cv. Mitchell and cv. V26) by regulating the expression of ODO1, a key regulator of the shikimate pathway, and of several biosynthetic floral scent-related genes (e.g. IGS, EGS, BSMT1, BSMT2, PAL1, PAL2, EPSPS, DAHPS, CS, CM1, ADT1 and PPA-AT). Binds to and activates the promoters of at least ODO1, IGS1 and PAL1. This is MYB-like transcription factor EOBI from Petunia hybrida (Petunia).